We begin with the raw amino-acid sequence, 221 residues long: Orotidine 5'-phosphate decarboxylase (221 aa).

Residues D12, K34, 60–69, S117, 170–180, G193, and R194 contribute to the substrate site; these read DFKVADIPNT and PGVGAQGGKAS. K62 serves as the catalytic Proton donor.

It belongs to the OMP decarboxylase family. Type 1 subfamily. As to quaternary structure, homodimer.

The catalysed reaction is orotidine 5'-phosphate + H(+) = UMP + CO2. It functions in the pathway pyrimidine metabolism; UMP biosynthesis via de novo pathway; UMP from orotate: step 2/2. Catalyzes the decarboxylation of orotidine 5'-monophosphate (OMP) to uridine 5'-monophosphate (UMP). This chain is Orotidine 5'-phosphate decarboxylase, found in Methanosarcina barkeri (strain Fusaro / DSM 804).